The chain runs to 300 residues: Neutral protease NprE (300 aa).

A Ca(2+)-binding site is contributed by aspartate 139. Residue histidine 143 participates in Zn(2+) binding. The active site involves glutamate 144. Zn(2+) contacts are provided by histidine 147 and glutamate 167. Ca(2+) contacts are provided by aspartate 178, aspartate 181, aspartate 183, and glutamate 186. The Proton donor role is filled by histidine 228.

The protein belongs to the peptidase M4 family. It depends on Ca(2+) as a cofactor. Zn(2+) is required as a cofactor.

It localises to the secreted. It catalyses the reaction Similar, but not identical, to that of thermolysin.. Functionally, extracellular zinc metalloprotease. The polypeptide is Neutral protease NprE (nprE) (Bacillus pumilus (Bacillus mesentericus)).